We begin with the raw amino-acid sequence, 154 residues long: Ascorbate-specific PTS system EIIA component (154 aa).

Positions 6 to 150 (SLAENKSIRL…QEVLDLIDRT (145 aa)) constitute a PTS EIIA type-2 domain. Residue H68 is the Tele-phosphohistidine intermediate of the active site. H68 bears the Phosphohistidine mark.

It is found in the cytoplasm. Its function is as follows. The phosphoenolpyruvate-dependent sugar phosphotransferase system (sugar PTS), a major carbohydrate active transport system, catalyzes the phosphorylation of incoming sugar substrates concomitantly with their translocation across the cell membrane. The enzyme II UlaABC PTS system is involved in ascorbate transport. The sequence is that of Ascorbate-specific PTS system EIIA component (ulaC) from Shigella flexneri.